A 603-amino-acid polypeptide reads, in one-letter code: Isocitrate dehydrogenase kinase/phosphatase (603 aa).

ATP contacts are provided by residues 327–333 and Lys348; that span reads APGIKGL. The active site involves Asp383.

This sequence belongs to the AceK family.

The protein resides in the cytoplasm. It carries out the reaction L-seryl-[isocitrate dehydrogenase] + ATP = O-phospho-L-seryl-[isocitrate dehydrogenase] + ADP + H(+). In terms of biological role, bifunctional enzyme which can phosphorylate or dephosphorylate isocitrate dehydrogenase (IDH) on a specific serine residue. This is a regulatory mechanism which enables bacteria to bypass the Krebs cycle via the glyoxylate shunt in response to the source of carbon. When bacteria are grown on glucose, IDH is fully active and unphosphorylated, but when grown on acetate or ethanol, the activity of IDH declines drastically concomitant with its phosphorylation. The polypeptide is Isocitrate dehydrogenase kinase/phosphatase (Burkholderia mallei (strain ATCC 23344)).